Consider the following 780-residue polypeptide: ATP-dependent 6-phosphofructokinase, liver type (780 aa).

Alanine 2 bears the N-acetylalanine mark. The interval 2 to 390 (ATVDLEKLRM…NWKIYKLLAH (389 aa)) is N-terminal catalytic PFK domain 1. ATP-binding positions include glycine 25, 88–89 (RC), and 118–121 (GDGS). A Mg(2+)-binding site is contributed by aspartate 119. Substrate is bound by residues 164–166 (SID), arginine 201, 208–210 (MGR), glutamate 264, arginine 292, and 298–301 (HVQR). Aspartate 166 acts as the Proton acceptor in catalysis. Serine 377 bears the Phosphoserine mark. The segment at 391–400 (QKVSKEKSNF) is interdomain linker. The segment at 401–780 (SLAILNVGAP…RRTLSIDKGF (380 aa)) is C-terminal regulatory PFK domain 2. Residues arginine 470, 527-531 (TISNN), arginine 565, 572-574 (MGG), and glutamate 628 contribute to the beta-D-fructose 2,6-bisphosphate site. Serine 529 carries O-linked (GlcNAc) serine glycosylation. Tyrosine 640 bears the Phosphotyrosine mark. Beta-D-fructose 2,6-bisphosphate-binding positions include arginine 654, 660–663 (HLQQ), and arginine 734. Serine 775 is modified (phosphoserine).

It belongs to the phosphofructokinase type A (PFKA) family. ATP-dependent PFK group I subfamily. Eukaryotic two domain clade 'E' sub-subfamily. As to quaternary structure, homo- and heterotetramers. Phosphofructokinase (PFK) enzyme functions as a tetramer composed of different combinations of 3 types of subunits, called PFKM (M), PFKL (L) and PFKP (P). The composition of the PFK tetramer differs according to the tissue type it is present in. The kinetic and regulatory properties of the tetrameric enzyme are dependent on the subunit composition, hence can vary across tissues. The cofactor is Mg(2+). Post-translationally, glcNAcylation at Ser-529 by OGT decreases enzyme activity, leading to redirect glucose flux through the oxidative pentose phosphate pathway. Glycosylation is stimulated by both hypoxia and glucose deprivation.

The protein localises to the cytoplasm. It catalyses the reaction beta-D-fructose 6-phosphate + ATP = beta-D-fructose 1,6-bisphosphate + ADP + H(+). The protein operates within carbohydrate degradation; glycolysis; D-glyceraldehyde 3-phosphate and glycerone phosphate from D-glucose: step 3/4. With respect to regulation, allosterically activated by ADP, AMP, or fructose 2,6-bisphosphate, and allosterically inhibited by ATP or citrate. GlcNAcylation by OGT overcomes allosteric regulation. Functionally, catalyzes the phosphorylation of D-fructose 6-phosphate to fructose 1,6-bisphosphate by ATP, the first committing step of glycolysis. Negatively regulates the phagocyte oxidative burst in response to bacterial infection by controlling cellular NADPH biosynthesis and NADPH oxidase-derived reactive oxygen species. Upon macrophage activation, drives the metabolic switch toward glycolysis, thus preventing glucose turnover that produces NADPH via pentose phosphate pathway. This Rattus norvegicus (Rat) protein is ATP-dependent 6-phosphofructokinase, liver type (Pfkl).